We begin with the raw amino-acid sequence, 173 residues long: Crossover junction endodeoxyribonuclease RuvC (173 aa).

Catalysis depends on residues Asp-8, Glu-67, and Asp-139. Mg(2+) contacts are provided by Asp-8, Glu-67, and Asp-139.

This sequence belongs to the RuvC family. In terms of assembly, homodimer which binds Holliday junction (HJ) DNA. The HJ becomes 2-fold symmetrical on binding to RuvC with unstacked arms; it has a different conformation from HJ DNA in complex with RuvA. In the full resolvosome a probable DNA-RuvA(4)-RuvB(12)-RuvC(2) complex forms which resolves the HJ. Requires Mg(2+) as cofactor.

It localises to the cytoplasm. It carries out the reaction Endonucleolytic cleavage at a junction such as a reciprocal single-stranded crossover between two homologous DNA duplexes (Holliday junction).. Functionally, the RuvA-RuvB-RuvC complex processes Holliday junction (HJ) DNA during genetic recombination and DNA repair. Endonuclease that resolves HJ intermediates. Cleaves cruciform DNA by making single-stranded nicks across the HJ at symmetrical positions within the homologous arms, yielding a 5'-phosphate and a 3'-hydroxyl group; requires a central core of homology in the junction. The consensus cleavage sequence is 5'-(A/T)TT(C/G)-3'. Cleavage occurs on the 3'-side of the TT dinucleotide at the point of strand exchange. HJ branch migration catalyzed by RuvA-RuvB allows RuvC to scan DNA until it finds its consensus sequence, where it cleaves and resolves the cruciform DNA. The chain is Crossover junction endodeoxyribonuclease RuvC from Photobacterium profundum (strain SS9).